A 1071-amino-acid chain; its full sequence is ATP-dependent helicase/deoxyribonuclease subunit B (1071 aa).

Belongs to the helicase family. AddB/RexB type 2 subfamily. Heterodimer of AddA and RexB. Requires Mg(2+) as cofactor.

Its function is as follows. The heterodimer acts as both an ATP-dependent DNA helicase and an ATP-dependent, dual-direction single-stranded exonuclease. Recognizes the chi site generating a DNA molecule suitable for the initiation of homologous recombination. This subunit has 5' -&gt; 3' nuclease activity but not helicase activity. This is ATP-dependent helicase/deoxyribonuclease subunit B from Streptococcus pyogenes serotype M49 (strain NZ131).